A 484-amino-acid chain; its full sequence is TPR repeat-containing protein YvcD (484 aa).

TPR repeat units lie at residues 21-54 (GQYFFHKGLKAYKERNLKRASKLIQRAVHLEPED), 55-88 (SEMLSQLAVIYSEMGQYQESNDLLDYIMANLEAE), and 187-220 (WSAYNNLALAYFYSGNVVKAKQTAYEVLSHNEGN).

The chain is TPR repeat-containing protein YvcD (yvcD) from Bacillus subtilis (strain 168).